Reading from the N-terminus, the 521-residue chain is Phosphoethanolamine transferase EptA (521 aa).

6 helical membrane passes run 18–38, 47–67, 79–99, 118–138, 150–170, and 182–202; these read AGLLYSLIFGVLYHFPLFVYV, FIAMMVVVLFCVNGALFLALG, IVFSLLNSVAFYFISAYKVFL, FLSVKLFVFIVVFGVLPGYVI, APFLAILALVFIFIASALANT, and FIGGLILPFAYSVNAFRVSAL.

The protein belongs to the phosphoethanolamine transferase family. EptA subfamily.

It is found in the cell inner membrane. It functions in the pathway bacterial outer membrane biogenesis; LPS lipid A biosynthesis. Probably catalyzes the addition of a phosphoethanolamine moiety to the dephosphorylated 1-position of the disaccharide backbone of lipid A. Lipid A that is 1-phosphorylated is not a substrate for this enzyme. This is Phosphoethanolamine transferase EptA from Helicobacter pylori (strain ATCC 700392 / 26695) (Campylobacter pylori).